A 418-amino-acid polypeptide reads, in one-letter code: Tryptophan synthase beta chain (418 aa).

Over residues methionine 1 to aspartate 12 the composition is skewed to polar residues. The tract at residues methionine 1 to arginine 21 is disordered. Lysine 111 bears the N6-(pyridoxal phosphate)lysine mark.

This sequence belongs to the TrpB family. As to quaternary structure, tetramer of two alpha and two beta chains. Pyridoxal 5'-phosphate serves as cofactor.

The catalysed reaction is (1S,2R)-1-C-(indol-3-yl)glycerol 3-phosphate + L-serine = D-glyceraldehyde 3-phosphate + L-tryptophan + H2O. It functions in the pathway amino-acid biosynthesis; L-tryptophan biosynthesis; L-tryptophan from chorismate: step 5/5. Functionally, the beta subunit is responsible for the synthesis of L-tryptophan from indole and L-serine. The sequence is that of Tryptophan synthase beta chain from Synechococcus sp. (strain CC9311).